Reading from the N-terminus, the 213-residue chain is NADH-quinone oxidoreductase subunit I (213 aa).

2 4Fe-4S ferredoxin-type domains span residues 74 to 103 (RFIE…METS) and 113 to 142 (GNYS…HGIE). The [4Fe-4S] cluster site is built by C83, C86, C89, C93, C122, C125, C128, and C132.

The protein belongs to the complex I 23 kDa subunit family. NDH-1 is composed of 14 different subunits. Subunits NuoA, H, J, K, L, M, N constitute the membrane sector of the complex. Requires [4Fe-4S] cluster as cofactor.

It is found in the cell inner membrane. It catalyses the reaction a quinone + NADH + 5 H(+)(in) = a quinol + NAD(+) + 4 H(+)(out). In terms of biological role, NDH-1 shuttles electrons from NADH, via FMN and iron-sulfur (Fe-S) centers, to quinones in the respiratory chain. The immediate electron acceptor for the enzyme in this species is believed to be ubiquinone. Couples the redox reaction to proton translocation (for every two electrons transferred, four hydrogen ions are translocated across the cytoplasmic membrane), and thus conserves the redox energy in a proton gradient. This Campylobacter jejuni subsp. doylei (strain ATCC BAA-1458 / RM4099 / 269.97) protein is NADH-quinone oxidoreductase subunit I.